Consider the following 342-residue polypeptide: UDP-3-O-acylglucosamine N-acyltransferase (342 aa).

Histidine 234 acts as the Proton acceptor in catalysis.

This sequence belongs to the transferase hexapeptide repeat family. LpxD subfamily. As to quaternary structure, homotrimer.

The enzyme catalyses a UDP-3-O-[(3R)-3-hydroxyacyl]-alpha-D-glucosamine + a (3R)-hydroxyacyl-[ACP] = a UDP-2-N,3-O-bis[(3R)-3-hydroxyacyl]-alpha-D-glucosamine + holo-[ACP] + H(+). It participates in bacterial outer membrane biogenesis; LPS lipid A biosynthesis. Its function is as follows. Catalyzes the N-acylation of UDP-3-O-acylglucosamine using 3-hydroxyacyl-ACP as the acyl donor. Is involved in the biosynthesis of lipid A, a phosphorylated glycolipid that anchors the lipopolysaccharide to the outer membrane of the cell. This Oleidesulfovibrio alaskensis (strain ATCC BAA-1058 / DSM 17464 / G20) (Desulfovibrio alaskensis) protein is UDP-3-O-acylglucosamine N-acyltransferase.